Reading from the N-terminus, the 190-residue chain is Probable nicotinate-nucleotide adenylyltransferase (190 aa).

It belongs to the NadD family.

The catalysed reaction is nicotinate beta-D-ribonucleotide + ATP + H(+) = deamido-NAD(+) + diphosphate. The protein operates within cofactor biosynthesis; NAD(+) biosynthesis; deamido-NAD(+) from nicotinate D-ribonucleotide: step 1/1. In terms of biological role, catalyzes the reversible adenylation of nicotinate mononucleotide (NaMN) to nicotinic acid adenine dinucleotide (NaAD). The polypeptide is Probable nicotinate-nucleotide adenylyltransferase (Borrelia hermsii (strain HS1 / DAH)).